The chain runs to 597 residues: Probable tyrosine-protein phosphatase (597 aa).

Residues 55–81 (VSSSSDAAPTSISTTTTSTTSMTDASA) show a composition bias toward low complexity. Disordered regions lie at residues 55–89 (VSSS…QQVY), 107–172 (SFSI…PNSL), and 188–228 (STNG…GNNN). The segment covering 107-126 (SFSIQPNQTPTMLPTSSYTL) has biased composition (polar residues). Positions 136 to 151 (TSSISSISSTSSNSTS) are enriched in low complexity. Composition is skewed to polar residues over residues 188–206 (STNG…NQPR) and 216–228 (KKST…GNNN). The Tyrosine-protein phosphatase domain maps to 428–579 (GPKNVLNNLI…LMEFGDKLNN (152 aa)). The active-site Phosphocysteine intermediate is C516.

Belongs to the protein-tyrosine phosphatase family. Non-receptor class dual specificity subfamily.

The catalysed reaction is O-phospho-L-tyrosyl-[protein] + H2O = L-tyrosyl-[protein] + phosphate. This chain is Probable tyrosine-protein phosphatase (CPP1), found in Candida albicans (strain WO-1) (Yeast).